The primary structure comprises 356 residues: Golgi-resident adenosine 3',5'-bisphosphate 3'-phosphatase (356 aa).

M1 carries the post-translational modification N-acetylmethionine. Topologically, residues 1 to 12 (MAPMGIRLSPLG) are cytoplasmic. The chain crosses the membrane as a helical span at residues 13-33 (VAVFFLLGLGVLYHLYSGFLA). Residues 34–356 (GRFSLFGLGS…KLPDLEKSGH (323 aa)) are Lumenal-facing. The tract at residues 84–104 (ESNVLHEKSKGKTREGADDKM) is disordered. D108 acts as the Proton acceptor in catalysis. Residues E131, D172, L174, and D175 each coordinate Mg(2+). Catalysis depends on T177, which acts as the Proton acceptor. 2 residues coordinate AMP: S240 and H243. N257 is a glycosylation site (N-linked (GlcNAc...) asparagine). The AMP site is built by G266 and K270. Residue D298 coordinates Mg(2+).

This sequence belongs to the inositol monophosphatase superfamily. Mg(2+) serves as cofactor. In terms of processing, N-glycosylated. Contains N-linked glycan resistant to endoglycosydase H.

The protein localises to the golgi apparatus. It is found in the trans-Golgi network membrane. The enzyme catalyses adenosine 3',5'-bisphosphate + H2O = AMP + phosphate. The protein operates within sulfur metabolism. With respect to regulation, strongly inhibited by lithium. Its function is as follows. Exhibits 3'-nucleotidase activity toward adenosine 3',5'-bisphosphate (PAP), namely hydrolyzes adenosine 3',5'-bisphosphate into adenosine 5'-monophosphate (AMP) and a phosphate. May play a role in the formation of skeletal elements derived through endochondral ossification, possibly by clearing adenosine 3',5'-bisphosphate produced by Golgi sulfotransferases during glycosaminoglycan sulfation. Has no activity toward 3'-phosphoadenosine 5'-phosphosulfate (PAPS) or inositol phosphate (IP) substrates including I(1)P, I(1,4)P2, I(1,3,4)P3, I(1,4,5)P3 and I(1,3,4,5)P4. This Mus musculus (Mouse) protein is Golgi-resident adenosine 3',5'-bisphosphate 3'-phosphatase.